We begin with the raw amino-acid sequence, 434 residues long: A-adding tRNA nucleotidyltransferase (434 aa).

An ATP-binding site is contributed by glycine 20–arginine 23. Aspartate 33 and aspartate 35 together coordinate Mg(2+). ATP-binding positions include arginine 91–aspartate 92, asparagine 96, aspartate 132–arginine 141, and arginine 177. The region spanning valine 227–methionine 339 is the HD domain.

It belongs to the tRNA nucleotidyltransferase/poly(A) polymerase family. Mg(2+) serves as cofactor.

The enzyme catalyses a tRNA with a 3' CC end + ATP = a tRNA with a 3' CCA end + diphosphate. TRNA nucleotidyltransferase involved in the synthesis of the tRNA CCA terminus. Adds the terminal adenosine residue to tRNA. This chain is A-adding tRNA nucleotidyltransferase, found in Deinococcus radiodurans (strain ATCC 13939 / DSM 20539 / JCM 16871 / CCUG 27074 / LMG 4051 / NBRC 15346 / NCIMB 9279 / VKM B-1422 / R1).